We begin with the raw amino-acid sequence, 460 residues long: Cysteine--tRNA ligase (460 aa).

Zn(2+) is bound at residue C28. Positions 30-40 match the 'HIGH' region motif; the sequence is MTVYDYCHLGH. 3 residues coordinate Zn(2+): C209, H234, and E238. Positions 266–270 match the 'KMSKS' region motif; it reads KMSKS. K269 lines the ATP pocket.

Belongs to the class-I aminoacyl-tRNA synthetase family. In terms of assembly, monomer. Zn(2+) is required as a cofactor.

The protein localises to the cytoplasm. It carries out the reaction tRNA(Cys) + L-cysteine + ATP = L-cysteinyl-tRNA(Cys) + AMP + diphosphate. In Pseudomonas fluorescens (strain ATCC BAA-477 / NRRL B-23932 / Pf-5), this protein is Cysteine--tRNA ligase.